The primary structure comprises 430 residues: Adenylosuccinate synthetase (430 aa).

GTP contacts are provided by residues 12–18 (GDEGKGK) and 40–42 (GHT). Aspartate 13 serves as the catalytic Proton acceptor. The Mg(2+) site is built by aspartate 13 and glycine 40. IMP is bound by residues 13–16 (DEGK), 38–41 (NAGH), threonine 128, arginine 142, glutamine 223, threonine 238, and arginine 302. Histidine 41 functions as the Proton donor in the catalytic mechanism. 298–304 (TTTGRPR) serves as a coordination point for substrate. GTP contacts are provided by residues arginine 304, 330–332 (LLD), and 412–414 (SVG).

This sequence belongs to the adenylosuccinate synthetase family. As to quaternary structure, homodimer. Mg(2+) serves as cofactor.

The protein localises to the cytoplasm. The catalysed reaction is IMP + L-aspartate + GTP = N(6)-(1,2-dicarboxyethyl)-AMP + GDP + phosphate + 2 H(+). It participates in purine metabolism; AMP biosynthesis via de novo pathway; AMP from IMP: step 1/2. In terms of biological role, plays an important role in the de novo pathway of purine nucleotide biosynthesis. Catalyzes the first committed step in the biosynthesis of AMP from IMP. The polypeptide is Adenylosuccinate synthetase (Listeria monocytogenes serotype 4a (strain HCC23)).